The primary structure comprises 1132 residues: SNF2 domain-containing protein CLASSY 4 (1132 aa).

Disordered regions lie at residues 24 to 104 (NKSK…SKSF), 224 to 331 (LRGE…HHKK), 376 to 396 (DPVV…PRER), and 525 to 544 (PSVN…LPNR). The Nuclear localization signal motif lies at 47–54 (KRRVNMRD). Positions 81–90 (EYPEGKRDDE) are enriched in basic and acidic residues. Polar residues predominate over residues 92–103 (VGSTSGNLQSKS). Over residues 233–242 (SDEVVSLSSS) the composition is skewed to low complexity. Acidic residues predominate over residues 243–254 (SDDEEDPLEELG). The span at 255–269 (TDSREEVSGEDRDSG) shows a compositional bias: basic and acidic residues. Acidic residues-rich tracts occupy residues 270-282 (ESDM…DSDS) and 291-309 (DSSD…EDEE). Composition is skewed to basic and acidic residues over residues 310 to 326 (GGTR…SEKV), 376 to 392 (DPVV…EHGK), and 525 to 539 (PSVN…RKGD). A Helicase ATP-binding domain is found at 603-796 (SVGVKGSGGC…SNVLCLARPA (194 aa)). 616-623 (HKAGTGKT) is an ATP binding site. The short motif at 747 to 750 (DEGH) is the DEAH box element. Positions 934–1087 (DFIRISGTVK…ELVFSSTNEK (154 aa)) constitute a Helicase C-terminal domain.

It belongs to the SNF2/RAD54 helicase family. In terms of assembly, interacts with NRPD1.

It is found in the nucleus. Probable chromatin remodeling factor. The polypeptide is SNF2 domain-containing protein CLASSY 4 (CLSY4) (Arabidopsis thaliana (Mouse-ear cress)).